We begin with the raw amino-acid sequence, 144 residues long: Gas vesicle protein A1 (144 aa).

Residues 72–144 form a disordered region; it reads EAGPRKDPGL…APSRRKEEQE (73 aa). A compositionally biased stretch (basic and acidic residues) spans 113–127; sequence KQARDDGGSERETSS.

This sequence belongs to the gas vesicle GvpA family. In terms of assembly, the gas vesicle shell is 2 nm thick and consists of a single layer of this protein. It forms helical ribs nearly perpendicular to the long axis of the vesicle.

The protein resides in the gas vesicle shell. In terms of biological role, gas vesicles are hollow, gas filled proteinaceous nanostructures found in some microorganisms. During planktonic growth they allow positioning of the organism at a favorable depth for light or nutrient acquisition. GvpA forms the protein shell. It is not clear what function GVs perform in soil bacteria. In Streptomyces coelicolor (strain ATCC BAA-471 / A3(2) / M145), this protein is Gas vesicle protein A1.